The primary structure comprises 132 residues: Antileukoproteinase (132 aa).

Residues methionine 1–glycine 25 form the signal peptide. 2 consecutive WAP domains span residues lysine 28–valine 76 and threonine 82–valine 130. Cystine bridges form between cysteine 35-cysteine 64, cysteine 43-cysteine 68, cysteine 51-cysteine 63, cysteine 57-cysteine 72, cysteine 89-cysteine 118, cysteine 96-cysteine 122, cysteine 105-cysteine 117, and cysteine 111-cysteine 126. Positions arginine 84 to alanine 132 are elastase inhibitory domain.

As to quaternary structure, interacts with GRN; interaction protects progranulin from proteolysis. Detected in blood plasma. Detected in bone marrow myeloid cells. Detected in airway sputum. Detected in parotid gland secretions. Detected in seminal plasma (at protein level). Detected in uterus cervix.

It is found in the secreted. Its function is as follows. Acid-stable proteinase inhibitor with strong affinities for trypsin, chymotrypsin, elastase, and cathepsin G. Modulates the inflammatory and immune responses after bacterial infection, and after infection by the intracellular parasite L.major. Down-regulates responses to bacterial lipopolysaccharide (LPS). Plays a role in regulating the activation of NF-kappa-B and inflammatory responses. Has antimicrobial activity against mycobacteria, but not against salmonella. Contributes to normal resistance against infection by M.tuberculosis. Required for normal resistance to infection by L.major. Required for normal wound healing, probably by preventing tissue damage by limiting protease activity. Together with ELANE, required for normal differentiation and proliferation of bone marrow myeloid cells. In Homo sapiens (Human), this protein is Antileukoproteinase (SLPI).